A 394-amino-acid chain; its full sequence is Upstream-binding factor 1-like protein 1 (394 aa).

Residues 101–169 (PKRPLTAYLR…DFQKKMRQFK (69 aa)) constitute a DNA-binding region (HMG box 1). Over residues 167–180 (QFKKRHPVSGHPKK) the composition is skewed to basic residues. Residues 167–197 (QFKKRHPVSGHPKKSVVPQSHPTKVPTKSQG) are disordered. A compositionally biased stretch (polar residues) spans 183 to 197 (VPQSHPTKVPTKSQG). Positions 225–291 (RKPPMNAYHK…QYRVKLDLWL (67 aa)) form a DNA-binding region, HMG box 2. The disordered stretch occupies residues 305–394 (AKATCGKRKN…SDSSSTDEDD (90 aa)).

The protein localises to the cytoplasm. The protein resides in the nucleus. Its function is as follows. Essential for proliferation of the inner cell mass and trophectodermal cells in peri-implantation development. The polypeptide is Upstream-binding factor 1-like protein 1 (Mus musculus (Mouse)).